The chain runs to 207 residues: dITP/XTP pyrophosphatase (207 aa).

8 to 13 is a binding site for substrate; sequence TNNKNK. Residue Asp72 is the Proton acceptor of the active site. Asp72 contacts Mg(2+). Substrate is bound by residues Ser73, 157 to 160, Lys180, and 185 to 186; these read FGYD and HR.

It belongs to the HAM1 NTPase family. Homodimer. Mg(2+) serves as cofactor.

The enzyme catalyses XTP + H2O = XMP + diphosphate + H(+). The catalysed reaction is dITP + H2O = dIMP + diphosphate + H(+). It carries out the reaction ITP + H2O = IMP + diphosphate + H(+). Its function is as follows. Pyrophosphatase that catalyzes the hydrolysis of nucleoside triphosphates to their monophosphate derivatives, with a high preference for the non-canonical purine nucleotides XTP (xanthosine triphosphate), dITP (deoxyinosine triphosphate) and ITP. Seems to function as a house-cleaning enzyme that removes non-canonical purine nucleotides from the nucleotide pool, thus preventing their incorporation into DNA/RNA and avoiding chromosomal lesions. The polypeptide is dITP/XTP pyrophosphatase (Lactobacillus johnsonii (strain CNCM I-12250 / La1 / NCC 533)).